The sequence spans 133 residues: Probable 4-amino-4-deoxy-L-arabinose-phosphoundecaprenol flippase subunit ArnF (133 aa).

The Cytoplasmic segment spans residues 1 to 5 (MKTGY). Residues 6–26 (LWAIASALLVTVAQLLLKIGM) traverse the membrane as a helical segment. Over 27 to 47 (SELPDLQLEKQWFDLHWLWAN) the chain is Periplasmic. A helical membrane pass occupies residues 48–68 (IIPISVVFVGLIGYVLSMVCW). Residues 51-125 (ISVVFVGLIG…IMLGVWLISQ (75 aa)) enclose the EamA domain. Topologically, residues 69 to 80 (LLTLRTIPLNKA) are cytoplasmic. The chain crosses the membrane as a helical span at residues 81–101 (YPLISLSYVFVYILAVVLPWF). The Periplasmic portion of the chain corresponds to 102 to 103 (QE). Residues 104-124 (TLSWSKTIGIIFIMLGVWLIS) traverse the membrane as a helical segment. The Cytoplasmic portion of the chain corresponds to 125–133 (QKTEQTTSH).

It belongs to the ArnF family. As to quaternary structure, heterodimer of ArnE and ArnF.

Its subcellular location is the cell inner membrane. It participates in bacterial outer membrane biogenesis; lipopolysaccharide biosynthesis. Translocates 4-amino-4-deoxy-L-arabinose-phosphoundecaprenol (alpha-L-Ara4N-phosphoundecaprenol) from the cytoplasmic to the periplasmic side of the inner membrane. The polypeptide is Probable 4-amino-4-deoxy-L-arabinose-phosphoundecaprenol flippase subunit ArnF (Proteus mirabilis (strain HI4320)).